A 403-amino-acid chain; its full sequence is NADH-quinone oxidoreductase subunit D (403 aa).

Belongs to the complex I 49 kDa subunit family. In terms of assembly, NDH-1 is composed of 14 different subunits. Subunits NuoB, C, D, E, F, and G constitute the peripheral sector of the complex.

Its subcellular location is the cell membrane. It carries out the reaction a quinone + NADH + 5 H(+)(in) = a quinol + NAD(+) + 4 H(+)(out). Functionally, NDH-1 shuttles electrons from NADH, via FMN and iron-sulfur (Fe-S) centers, to quinones in the respiratory chain. The immediate electron acceptor for the enzyme in this species is believed to be a menaquinone. Couples the redox reaction to proton translocation (for every two electrons transferred, four hydrogen ions are translocated across the cytoplasmic membrane), and thus conserves the redox energy in a proton gradient. The polypeptide is NADH-quinone oxidoreductase subunit D (Amoebophilus asiaticus (strain 5a2)).